Here is a 224-residue protein sequence, read N- to C-terminus: C-reactive protein (224 aa).

The first 18 residues, 1 to 18 (MEKLLCFLVLTSLSHAFG), serve as a signal peptide directing secretion. Glutamine 19 carries the pyrrolidone carboxylic acid modification. One can recognise a Pentraxin (PTX) domain in the interval 23 to 224 (SRKAFVFPKE…EVFTKPQLWP (202 aa)). An intrachain disulfide couples cysteine 54 to cysteine 115. Residues aspartate 78, asparagine 79, glutamate 156, glutamine 157, aspartate 158, and glutamine 168 each coordinate Ca(2+).

Belongs to the pentraxin family. In terms of assembly, homopentamer. Pentraxin (or pentaxin) have a discoid arrangement of 5 non-covalently bound subunits. Interacts with FCN1; may regulate monocyte activation by FCN1. The cofactor is Ca(2+). Found in plasma.

The protein resides in the secreted. Its function is as follows. Displays several functions associated with host defense: it promotes agglutination, bacterial capsular swelling, phagocytosis and complement fixation through its calcium-dependent binding to phosphorylcholine. Can interact with DNA and histones and may scavenge nuclear material released from damaged circulating cells. In Homo sapiens (Human), this protein is C-reactive protein (CRP).